A 578-amino-acid polypeptide reads, in one-letter code: Arginine--tRNA ligase (578 aa).

Positions 122 to 132 match the 'HIGH' region motif; the sequence is PNLAKEMHVGH.

Belongs to the class-I aminoacyl-tRNA synthetase family. As to quaternary structure, monomer.

Its subcellular location is the cytoplasm. It catalyses the reaction tRNA(Arg) + L-arginine + ATP = L-arginyl-tRNA(Arg) + AMP + diphosphate. The chain is Arginine--tRNA ligase from Pseudoalteromonas atlantica (strain T6c / ATCC BAA-1087).